We begin with the raw amino-acid sequence, 308 residues long: Uridylate cyclase (308 aa).

D62 and D106 together coordinate Mn(2+).

This sequence belongs to the adenylyl cyclase class-4/guanylyl cyclase family. Pyrimidine cyclase subfamily. As to quaternary structure, homodimer. The cofactor is Mn(2+).

It localises to the cytoplasm. The enzyme catalyses GTP = 3',5'-cyclic GMP + diphosphate. It catalyses the reaction UTP = 3',5'-cyclic UMP + diphosphate. Functionally, pycsar (pyrimidine cyclase system for antiphage resistance) provides immunity against bacteriophage. The pyrimidine cyclase (PycC) synthesizes cyclic nucleotides in response to infection; these serve as specific second messenger signals. The signals activate the adjacent effector, leading to bacterial cell death and abortive phage infection. A clade D Pycsar system. In terms of biological role, the pyrimidine cyclase gene of a two-gene Pycsar system, generates cyclic UMP (cUMP) from UTP as well as cGMP from GTP to a lesser extent, has little to no activity on ATP or CTP. Expression of this and adjacent effector PtPycTM (AC A0A4Q9KQH5) probably confers resistance to bacteriophage. The genes are probably only expressed in response to bacteriophage infection. In Propioniciclava tarda, this protein is Uridylate cyclase.